The following is a 44-amino-acid chain: DNA-directed RNA polymerase subunit Rpo12 (44 aa).

The Zn(2+) site is built by Cys8, Cys22, and Cys25.

Belongs to the archaeal Rpo12/eukaryotic RPC10 RNA polymerase subunit family. In terms of assembly, part of the RNA polymerase complex. Zn(2+) serves as cofactor.

It is found in the cytoplasm. The enzyme catalyses RNA(n) + a ribonucleoside 5'-triphosphate = RNA(n+1) + diphosphate. DNA-dependent RNA polymerase (RNAP) catalyzes the transcription of DNA into RNA using the four ribonucleoside triphosphates as substrates. This Haloquadratum walsbyi (strain DSM 16790 / HBSQ001) protein is DNA-directed RNA polymerase subunit Rpo12.